Consider the following 723-residue polypeptide: ATP-dependent zinc metalloprotease YME1 homolog (723 aa).

The helical transmembrane segment at 198–220 threads the bilayer; it reads LTRFYIFLVFCIFFGYLTGRIRV. 288–295 provides a ligand contact to ATP; sequence GPPGTGKT. Residue His509 coordinates Zn(2+). Glu510 is a catalytic residue. The Zn(2+) site is built by His513 and Asp587.

In the N-terminal section; belongs to the AAA ATPase family. The protein in the C-terminal section; belongs to the peptidase M41 family. The cofactor is Zn(2+).

The protein resides in the mitochondrion inner membrane. It is found in the mitochondrion. Functionally, ATP-dependent metalloprotease that catalyzes the degradation of folded and unfolded proteins with a suitable degron sequence in the mitochondrial intermembrane region. Plays an important role in regulating mitochondrial morphology and function. The protein is ATP-dependent zinc metalloprotease YME1 homolog (ymel-1) of Caenorhabditis elegans.